A 635-amino-acid polypeptide reads, in one-letter code: Beta-mannosyltransferase 2 (635 aa).

The Cytoplasmic segment spans residues 1–6 (MRTRLN). Residues 7–27 (FLLLCIASVLSVIWIGVLLTW) traverse the membrane as a helical segment. The Extracellular portion of the chain corresponds to 28–635 (NDNNLGGISL…EKKEAEKKGK (608 aa)). N484 is a glycosylation site (N-linked (GlcNAc...) asparagine). A coiled-coil region spans residues 512–635 (TRGEAERRRR…EKKEAEKKGK (124 aa)). Residues 517-635 (ERRRRVAEER…EKKEAEKKGK (119 aa)) are disordered.

It belongs to the BMT family.

Its subcellular location is the membrane. In terms of biological role, beta-mannosyltransferase involved in cell wall biosynthesis. Initiates the beta-mannosylation of core N-linked glycans. The polypeptide is Beta-mannosyltransferase 2 (BMT2) (Komagataella phaffii (strain ATCC 76273 / CBS 7435 / CECT 11047 / NRRL Y-11430 / Wegner 21-1) (Yeast)).